The following is a 495-amino-acid chain: Probable plastidic glucose transporter 3 (495 aa).

A run of 12 helical transmembrane segments spans residues 55 to 75 (LPHV…LGVV), 97 to 117 (LVVS…GLVA), 131 to 151 (LPMI…GMLL), 154 to 174 (FLVG…VTEV), 183 to 203 (YGSS…FAGI), 214 to 234 (ICFW…ELCV), 294 to 314 (VVFI…NAVF), 330 to 350 (SANI…VVLM), 357 to 377 (VLLI…AIAY), 384 to 404 (FGTL…FATG), 425 to 445 (ALAV…LLFL), and 451 to 471 (LGSV…VIFV).

This sequence belongs to the major facilitator superfamily. Sugar transporter (TC 2.A.1.1) family.

Its subcellular location is the plastid. It localises to the chloroplast membrane. Functionally, may be involved in the efflux of glucose towards the cytosol. The polypeptide is Probable plastidic glucose transporter 3 (Arabidopsis thaliana (Mouse-ear cress)).